The chain runs to 444 residues: Phosphoglucosamine mutase (444 aa).

The active-site Phosphoserine intermediate is Ser-102. Positions 102, 239, 241, and 243 each coordinate Mg(2+). Residue Ser-102 is modified to Phosphoserine.

It belongs to the phosphohexose mutase family. Mg(2+) is required as a cofactor. Activated by phosphorylation.

The enzyme catalyses alpha-D-glucosamine 1-phosphate = D-glucosamine 6-phosphate. Its function is as follows. Catalyzes the conversion of glucosamine-6-phosphate to glucosamine-1-phosphate. This Mycolicibacterium paratuberculosis (strain ATCC BAA-968 / K-10) (Mycobacterium paratuberculosis) protein is Phosphoglucosamine mutase.